Reading from the N-terminus, the 82-residue chain is NAD(P)H-quinone oxidoreductase subunit O, organellar chromatophore (82 aa).

This sequence belongs to the complex I NdhO subunit family. NDH-1 can be composed of about 15 different subunits; different subcomplexes with different compositions have been identified which probably have different functions.

It is found in the plastid. Its subcellular location is the organellar chromatophore thylakoid membrane. The catalysed reaction is a plastoquinone + NADH + (n+1) H(+)(in) = a plastoquinol + NAD(+) + n H(+)(out). The enzyme catalyses a plastoquinone + NADPH + (n+1) H(+)(in) = a plastoquinol + NADP(+) + n H(+)(out). NDH-1 shuttles electrons from an unknown electron donor, via FMN and iron-sulfur (Fe-S) centers, to quinones in the respiratory and/or the photosynthetic chain. The immediate electron acceptor for the enzyme in this species is believed to be plastoquinone. Couples the redox reaction to proton translocation, and thus conserves the redox energy in a proton gradient. Cyanobacterial NDH-1 also plays a role in inorganic carbon-concentration. The polypeptide is NAD(P)H-quinone oxidoreductase subunit O, organellar chromatophore (Paulinella chromatophora).